We begin with the raw amino-acid sequence, 281 residues long: Protein DOG1-like 1 (281 aa).

In terms of domain architecture, DOG1 spans 9–265 (EKLQQDCYNE…HEWGKSREHR (257 aa)). The disordered stretch occupies residues 262-281 (REHRRLEASGGDSGGNVTRE).

The polypeptide is Protein DOG1-like 1 (Arabidopsis thaliana (Mouse-ear cress)).